A 404-amino-acid polypeptide reads, in one-letter code: Aspartokinase 1 (404 aa).

7–10 (KFGG) lines the ATP pocket. 25 to 30 (HIKEAI) contacts substrate. ATP is bound at residue S41. Substrate contacts are provided by residues 52–54 (TDS), E79, 130–131 (LA), 155–158 (RGGS), and S158. ATP contacts are provided by residues 178–179 (TD) and 184–189 (MTADPR). Substrate contacts are provided by residues 299–301 (SVD), 355–356 (VT), 369–370 (PI), and 376–377 (SH). The 61-residue stretch at 344-404 (AVGAGIMGVP…ALHEVFELSK (61 aa)) folds into the ACT domain.

Belongs to the aspartokinase family. As to quaternary structure, tetramer consisting of 2 isoforms Alpha (catalytic) and 2 isoforms Beta (function not known).

The catalysed reaction is L-aspartate + ATP = 4-phospho-L-aspartate + ADP. It participates in amino-acid biosynthesis; L-lysine biosynthesis via DAP pathway; (S)-tetrahydrodipicolinate from L-aspartate: step 1/4. The protein operates within amino-acid biosynthesis; L-methionine biosynthesis via de novo pathway; L-homoserine from L-aspartate: step 1/3. Its pathway is amino-acid biosynthesis; L-threonine biosynthesis; L-threonine from L-aspartate: step 1/5. With respect to regulation, diaminopimelate-sensitive. In terms of biological role, catalyzes the phosphorylation of the beta-carboxyl group of aspartic acid with ATP to yield 4-phospho-L-aspartate, which is involved in the branched biosynthetic pathway leading to the biosynthesis of amino acids threonine, isoleucine and methionine. In Bacillus subtilis (strain 168), this protein is Aspartokinase 1 (dapG).